The primary structure comprises 244 residues: MEIGKNNMDTCNMASSDKDVKIHFKVARFIMEAGVKLGMHSVPIATACTIYHKFYKETSLENYDPHLVAMSAIYLAGKVEEQHLRTRDIINVCHRYNNPGSEPLEVDSKFWELRDNIVHCELLMLRMLNFRVSFQHPHKYLLHYLISLKNWMNRHSWERTPIATAAWALLRDSYHGDLCLRYEPQQIAVAVLYFALQCYGVEVPSNSNAETSWWQVFSEDITILTINNIISDLIHIYTMDTEIV.

It belongs to the cyclin family. Cyclin-like FAM58 subfamily.

Its function is as follows. May be an activating cyclin for the cyclin-associated kinase CDK10. This is Cyclin-Q (ccnq) from Xenopus laevis (African clawed frog).